The chain runs to 241 residues: Uracil-DNA glycosylase (241 aa).

Aspartate 71 acts as the Proton acceptor in catalysis.

It belongs to the uracil-DNA glycosylase (UDG) superfamily. UNG family.

It is found in the cytoplasm. The catalysed reaction is Hydrolyzes single-stranded DNA or mismatched double-stranded DNA and polynucleotides, releasing free uracil.. Excises uracil residues from the DNA which can arise as a result of misincorporation of dUMP residues by DNA polymerase or due to deamination of cytosine. The sequence is that of Uracil-DNA glycosylase from Xanthomonas euvesicatoria pv. vesicatoria (strain 85-10) (Xanthomonas campestris pv. vesicatoria).